We begin with the raw amino-acid sequence, 370 residues long: G-protein coupled receptor homolog K2 (370 aa).

Residues 1 to 61 (MTSPTNSTML…CTFLEDTKYH (61 aa)) are Extracellular-facing. N-linked (GlcNAc...) asparagine; by host glycans are attached at residues Asn-6 and Asn-51. A helical membrane pass occupies residues 62 to 82 (IIVIHIILFLLGSIGNIFVVS). The Cytoplasmic portion of the chain corresponds to 83 to 94 (LIAFKRNKSITD). A helical membrane pass occupies residues 95-115 (IYILNLSMSDCIFVFQIPFIV). Residues 116 to 131 (YSKLDQWIFGNILCKI) are Extracellular-facing. Residues 132 to 152 (MSVLYYVGFFSNMFIITLMSI) traverse the membrane as a helical segment. Over 153–171 (DRYFAIVHPIKRQPYRTKR) the chain is Cytoplasmic. A helical transmembrane segment spans residues 172–192 (IGILMCCSAWLLSLILSSPVS). Residues 193–223 (KLYENIPHMSKDIYQCTLTNENDSIIAFIKR) lie on the Extracellular side of the membrane. Residues 224–244 (LMQIEITILGFLIPIIIFVYC) traverse the membrane as a helical segment. Topologically, residues 245–265 (YYRIFTTVVRLRNRRKYKSIK) are cytoplasmic. Residues 266-286 (IVLMIVVCSLICWIPLYIVLM) traverse the membrane as a helical segment. Residues 287-300 (IATIVSLYTSNIFR) lie on the Extracellular side of the membrane. The chain crosses the membrane as a helical span at residues 301-321 (HLCLYLNLAYAITFSETISLA). Residues 322 to 370 (RCCINPIIYTLIGEHVRSRISSICSCIYRDNRIRKKLFSRKSSSSSNII) are Cytoplasmic-facing.

It belongs to the G-protein coupled receptor 1 family.

Its subcellular location is the host cell membrane. In terms of biological role, putative chemokine receptor. The polypeptide is G-protein coupled receptor homolog K2 (Sus scrofa (Pig)).